We begin with the raw amino-acid sequence, 247 residues long: MHTPVLFEHPLNEKMRTWLRIEFLIQQMAFHPMIATHADALHFFRNAGDLLDVLERGEVRTDLVKELERQQRKLQSWAEVPGVDQERINELRQQLKQSSSTLMAAPRIGQFLREDRLIALVRQRLSIPGGCCSFDLPTLHIWLHMPQAHRDEQVASWLASLDPLIQSLNLILDLIRNSALFRKQTSLNGFYQDNGEDADLLRLRLDLAHQLYPQISGHKSRFAIRFLPLDSEYGIVPERFDFELACC.

This sequence belongs to the ZapD family. As to quaternary structure, interacts with FtsZ.

The protein resides in the cytoplasm. Cell division factor that enhances FtsZ-ring assembly. Directly interacts with FtsZ and promotes bundling of FtsZ protofilaments, with a reduction in FtsZ GTPase activity. The sequence is that of Cell division protein ZapD from Klebsiella pneumoniae (strain 342).